The following is a 237-amino-acid chain: uncharacterized protein (237 aa).

Residues E91, E93, and D122 each coordinate a divalent metal cation.

This sequence belongs to the FAH family.

This is an uncharacterized protein from Methanocaldococcus jannaschii (strain ATCC 43067 / DSM 2661 / JAL-1 / JCM 10045 / NBRC 100440) (Methanococcus jannaschii).